The primary structure comprises 334 residues: WD repeat-containing protein 54 (334 aa).

3 WD repeats span residues 162 to 206 (GHQM…TLLT), 208 to 247 (IPGF…LHVQ), and 250 to 289 (AHAR…ESGY).

As to quaternary structure, homodimer and homotrimer; forms tight forms of dimers and trimers. Interacts with IZUMO1 and IZUMO1R/JUNO. In terms of processing, cross-linked to tightly form both dimers and trimers by TGM2. Cross-linking enhances the activation of EGF receptor-mediated signaling pathway. Cross-linking is inhibited by EGF. Post-translationally, ubiquitinated. EGF increases ubiquitination. Expressed in epithelial cells (at protein level). Isoform 3 expression is highly increased in colorectal cancer cells.

Its subcellular location is the vesicle. It is found in the cytoplasm. The protein localises to the cell membrane. Plays a role in the adhesion and fusion of the sperm-oocyte membrane through its interactions with IZUMO1 and IZUMO1R/JUNO. When cross-linked to form dimers and trimers, it has a regulatory effect on ERK signaling pathway activity in response to EGF stimulation. Colocalizes with the EGF receptor in WDR54-specific vesicle where it sustains the internalization and controls the degradation of the EGF receptor after EGF stimulation. This Homo sapiens (Human) protein is WD repeat-containing protein 54.